Reading from the N-terminus, the 323-residue chain is tRNA U34 carboxymethyltransferase (323 aa).

Residues lysine 91, tryptophan 105, lysine 110, glycine 130, 152–154 (DPT), 181–182 (IE), methionine 196, tyrosine 200, and arginine 315 each bind carboxy-S-adenosyl-L-methionine.

The protein belongs to the class I-like SAM-binding methyltransferase superfamily. CmoB family. In terms of assembly, homotetramer.

The enzyme catalyses carboxy-S-adenosyl-L-methionine + 5-hydroxyuridine(34) in tRNA = 5-carboxymethoxyuridine(34) in tRNA + S-adenosyl-L-homocysteine + H(+). Functionally, catalyzes carboxymethyl transfer from carboxy-S-adenosyl-L-methionine (Cx-SAM) to 5-hydroxyuridine (ho5U) to form 5-carboxymethoxyuridine (cmo5U) at position 34 in tRNAs. The protein is tRNA U34 carboxymethyltransferase of Salmonella typhi.